The sequence spans 194 residues: Oligoribonuclease (194 aa).

An Exonuclease domain is found at 11–174 (LIWIDLEMTG…SDVRDSIDEL (164 aa)). Tyr-132 is an active-site residue.

Belongs to the oligoribonuclease family.

It localises to the cytoplasm. In terms of biological role, 3'-to-5' exoribonuclease specific for small oligoribonucleotides. This is Oligoribonuclease from Xanthomonas axonopodis pv. citri (strain 306).